The primary structure comprises 113 residues: U11-theraphotoxin-Hhn1a (113 aa).

Residues 1 to 21 form the signal peptide; the sequence is MNTVRVTFLLVFVLAVSLGQA. The propeptide occupies 22-74; it reads DKDENRMVMQEKTEQGKSYLDFAENLLLQKLEELEAKLLEEDSEESRNSRQKR. Cystine bridges form between Cys-75-Cys-90, Cys-82-Cys-95, and Cys-89-Cys-110.

The protein belongs to the neurotoxin 14 (magi-1) family. 01 (HNTX-16) subfamily. In terms of tissue distribution, expressed by the venom gland.

The protein localises to the secreted. Probable ion channel inhibitor. The polypeptide is U11-theraphotoxin-Hhn1a (Cyriopagopus hainanus (Chinese bird spider)).